Consider the following 399-residue polypeptide: MTGLNSLDLPGRPEDTRVVVAMSGGVDSSVTAALLKEQGYDVVGITLQLYDHGAAVSRKGACCAGQDIQDARRVADQIGIPHYVLDYEDRFRRAVMDDFADSYAAGETPIPCVRCNERVKFRDLLDTARDLGAAALATGHYIASRRGAAGRELHRPRDEERDQSYFLFATTQEQLEFLRFPLGELTKPEARALADRMGLEVAGKPDSQDICFVPTGRYTTIVEKLRPGASAPGEVVHLDGRVLGRHSGIVNFTIGQRRGLGIGASEPVSEPLFVVKLDPLKRQVIVGPREALETQKLTLRDINWLGDGPFAELPGEGLKIVAKVRSTRPPVPARLFRTGEGAVVELLESEGGVAPGQACVFYDGGGGQRVLGGGWIVRTESCWQVPEAGTSRVAAPTAD.

ATP is bound by residues 21 to 28 (AMSGGVDS) and Leu-47. The active-site Nucleophile is the Cys-115. A disulfide bridge connects residues Cys-115 and Cys-211. Gly-139 contacts ATP. Positions 161–163 (RDQ) are interaction with tRNA. Cys-211 functions as the Cysteine persulfide intermediate in the catalytic mechanism.

This sequence belongs to the MnmA/TRMU family.

Its subcellular location is the cytoplasm. It carries out the reaction S-sulfanyl-L-cysteinyl-[protein] + uridine(34) in tRNA + AH2 + ATP = 2-thiouridine(34) in tRNA + L-cysteinyl-[protein] + A + AMP + diphosphate + H(+). Its function is as follows. Catalyzes the 2-thiolation of uridine at the wobble position (U34) of tRNA, leading to the formation of s(2)U34. The sequence is that of tRNA-specific 2-thiouridylase MnmA from Parvibaculum lavamentivorans (strain DS-1 / DSM 13023 / NCIMB 13966).